The chain runs to 515 residues: uncharacterized protein (515 aa).

A run of 3 helical transmembrane segments spans residues 1-21 (MSFVVAAPEVVVAAASDLAGI), 165-185 (IGGPGATGLAGGAGGVGGLLF), and 199-219 (GPVGATGGIGGPGGAAVGLFG). One can recognise a PE domain in the interval 1-93 (MSFVVAAPEV…AGAYAGAEAA (93 aa)). Positions 349 to 360 (GGTLIGNGGDGG) are enriched in gly residues. Disordered stretches follow at residues 349–368 (GGTLIGNGGDGGNSVQTDGF) and 463–515 (GVSG…SPGG).

This sequence belongs to the mycobacterial PE family. PGRS subfamily.

Its subcellular location is the cell membrane. This is an uncharacterized protein from Mycobacterium tuberculosis (strain CDC 1551 / Oshkosh).